The primary structure comprises 417 residues: MAEIRNYTLNFGPQHPAAHGVLRLILEIDGEVIERADPHIGLLHRGTEKLVESKPYNQSIGYMDRLDYVSMMCNEHAYIMAIETMLGIKVPERAQYIRVMFDEITRILNHLMWLGTHGLDVGAMSIFLYAFREREKLIDCYEAVSGSRMHATYYRPGGVYRDLPDKMPQYLASGFRTDKELKTMNENRQGSLLDFIADFVKEFPKSIKQYDDLLTDNRIWKQRLVNIGIVSANRAKQLGFTGPMLRGSGVAWDLRKNQPYAVYDQLEFDIPVGVTGDSYDRYLVRMEEMRQSNHIIKQCVKWLQGNPGAVMSDDHKVSPPKRTDMKGDMESLIHHFKLFTEGYCLSEGEIYRAVEHPKGEFGIYLISDGANKPYRVKIRAPGFAHLAAMNEMARGHMLSDVVTIIGTQDIVFGEIDR.

Belongs to the complex I 49 kDa subunit family. In terms of assembly, NDH-1 is composed of 14 different subunits. Subunits NuoB, C, D, E, F, and G constitute the peripheral sector of the complex.

The protein resides in the cell inner membrane. It catalyses the reaction a quinone + NADH + 5 H(+)(in) = a quinol + NAD(+) + 4 H(+)(out). NDH-1 shuttles electrons from NADH, via FMN and iron-sulfur (Fe-S) centers, to quinones in the respiratory chain. The immediate electron acceptor for the enzyme in this species is believed to be ubiquinone. Couples the redox reaction to proton translocation (for every two electrons transferred, four hydrogen ions are translocated across the cytoplasmic membrane), and thus conserves the redox energy in a proton gradient. This chain is NADH-quinone oxidoreductase subunit D, found in Ruthia magnifica subsp. Calyptogena magnifica.